Here is a 98-residue protein sequence, read N- to C-terminus: NADH-ubiquinone oxidoreductase chain 4L (98 aa).

Transmembrane regions (helical) follow at residues 1 to 21 (MTLVHMNLLLAFAMSLTGLLM), 26 to 46 (LMSALLCLEGMVLSLFILATI), and 59 to 79 (MPIILLVFAACEAAIGLALLV).

Belongs to the complex I subunit 4L family. In terms of assembly, core subunit of respiratory chain NADH dehydrogenase (Complex I) which is composed of 45 different subunits.

It localises to the mitochondrion inner membrane. The catalysed reaction is a ubiquinone + NADH + 5 H(+)(in) = a ubiquinol + NAD(+) + 4 H(+)(out). Its function is as follows. Core subunit of the mitochondrial membrane respiratory chain NADH dehydrogenase (Complex I) which catalyzes electron transfer from NADH through the respiratory chain, using ubiquinone as an electron acceptor. Part of the enzyme membrane arm which is embedded in the lipid bilayer and involved in proton translocation. This Pontoporia blainvillei (Franciscana) protein is NADH-ubiquinone oxidoreductase chain 4L (MT-ND4L).